The following is a 327-amino-acid chain: Phenylalanine--tRNA ligase alpha subunit (327 aa).

Glu252 serves as a coordination point for Mg(2+).

The protein belongs to the class-II aminoacyl-tRNA synthetase family. Phe-tRNA synthetase alpha subunit type 1 subfamily. In terms of assembly, tetramer of two alpha and two beta subunits. The cofactor is Mg(2+).

The protein localises to the cytoplasm. It catalyses the reaction tRNA(Phe) + L-phenylalanine + ATP = L-phenylalanyl-tRNA(Phe) + AMP + diphosphate + H(+). The sequence is that of Phenylalanine--tRNA ligase alpha subunit from Pectobacterium carotovorum subsp. carotovorum (strain PC1).